Consider the following 232-residue polypeptide: Putative N-acetylmannosamine-6-phosphate 2-epimerase (232 aa).

Belongs to the NanE family.

It catalyses the reaction an N-acyl-D-glucosamine 6-phosphate = an N-acyl-D-mannosamine 6-phosphate. It participates in amino-sugar metabolism; N-acetylneuraminate degradation; D-fructose 6-phosphate from N-acetylneuraminate: step 3/5. In terms of biological role, converts N-acetylmannosamine-6-phosphate (ManNAc-6-P) to N-acetylglucosamine-6-phosphate (GlcNAc-6-P). This Corynebacterium glutamicum (strain R) protein is Putative N-acetylmannosamine-6-phosphate 2-epimerase.